We begin with the raw amino-acid sequence, 933 residues long: Isoleucine--tRNA ligase (933 aa).

The 'HIGH' region motif lies at 57-67 (PYANGNIHVGH). E554 contacts L-isoleucyl-5'-AMP. The 'KMSKS' region signature appears at 595–599 (KMSKS). K598 provides a ligand contact to ATP.

Belongs to the class-I aminoacyl-tRNA synthetase family. IleS type 1 subfamily. Monomer.

Its subcellular location is the cytoplasm. It catalyses the reaction tRNA(Ile) + L-isoleucine + ATP = L-isoleucyl-tRNA(Ile) + AMP + diphosphate. In terms of biological role, catalyzes the attachment of isoleucine to tRNA(Ile). As IleRS can inadvertently accommodate and process structurally similar amino acids such as valine, to avoid such errors it has two additional distinct tRNA(Ile)-dependent editing activities. One activity is designated as 'pretransfer' editing and involves the hydrolysis of activated Val-AMP. The other activity is designated 'posttransfer' editing and involves deacylation of mischarged Val-tRNA(Ile). The sequence is that of Isoleucine--tRNA ligase from Streptococcus pyogenes serotype M1.